The sequence spans 297 residues: tRNA pseudouridine synthase B (297 aa).

Catalysis depends on aspartate 44, which acts as the Nucleophile.

This sequence belongs to the pseudouridine synthase TruB family. Type 1 subfamily.

It carries out the reaction uridine(55) in tRNA = pseudouridine(55) in tRNA. Its function is as follows. Responsible for synthesis of pseudouridine from uracil-55 in the psi GC loop of transfer RNAs. This Corynebacterium glutamicum (strain ATCC 13032 / DSM 20300 / JCM 1318 / BCRC 11384 / CCUG 27702 / LMG 3730 / NBRC 12168 / NCIMB 10025 / NRRL B-2784 / 534) protein is tRNA pseudouridine synthase B.